An 809-amino-acid chain; its full sequence is Spindle pole body component alp14 (809 aa).

HEAT repeat units follow at residues 127 to 164 (DSAAPVIESIIPSLSARSPKVIASNVAAIASLVEQFGA) and 167 to 204 (IPSKMIIPHISNLFGHADKNVRKEASRLTVNIYRWTGD). Disordered stretches follow at residues 233-274 (PPKQ…SDDQ), 507-608 (AKAP…SGAL), and 619-638 (ELDDPAPQPAKHSRVDRYEH). The span at 239–253 (FLKSQQPTSEPNVET) shows a compositional bias: polar residues. Residues 262 to 274 (ENEESEPEPSDDQ) are compositionally biased toward acidic residues. Over residues 509–518 (APTKKSKVKP) the composition is skewed to basic residues. 2 stretches are compositionally biased toward low complexity: residues 526-551 (VVVPSNAKAVKKSVVPSSPVVPSPRK) and 582-595 (SRGLSRGTSSSLQQ). Phosphoserine is present on residues Ser-543 and Ser-548. Polar residues predominate over residues 597 to 608 (VKASTPLNSGAL). A coiled-coil region spans residues 637 to 697 (EHPKVLEDND…NTLRSARKAS (61 aa)). A phosphoserine mark is found at Ser-697 and Ser-720.

It belongs to the TOG/XMAP215 family. Interacts with alp14.

The protein resides in the cytoplasm. Its subcellular location is the cytoskeleton. It localises to the microtubule organizing center. The protein localises to the spindle pole body. It is found in the chromosome. The protein resides in the centromere. Its subcellular location is the kinetochore. Its function is as follows. Required for bipolar spindle formation and proper chromosome segregation. Has a role in connecting the kinetochores and the plus end of pole to chromosome microtubules. Also required for the activation of the spindle checkpoint pathway. The protein is Spindle pole body component alp14 (alp14) of Schizosaccharomyces pombe (strain 972 / ATCC 24843) (Fission yeast).